Reading from the N-terminus, the 268-residue chain is Taurine import ATP-binding protein TauB (268 aa).

The region spanning 4–236 (LSIENISMRF…MGVNADLREV (233 aa)) is the ABC transporter domain. 41-48 (GPSGCGKT) contributes to the ATP binding site.

This sequence belongs to the ABC transporter superfamily. Taurine importer (TC 3.A.1.17.1) family. In terms of assembly, the complex is composed of two ATP-binding proteins (TauB), two transmembrane proteins (TauC) and a solute-binding protein (TauA).

Its subcellular location is the cell inner membrane. The enzyme catalyses taurine(out) + ATP + H2O = taurine(in) + ADP + phosphate + H(+). Its function is as follows. Part of the ABC transporter complex TauABC involved in taurine import. Responsible for energy coupling to the transport system. This Ruegeria pomeroyi (strain ATCC 700808 / DSM 15171 / DSS-3) (Silicibacter pomeroyi) protein is Taurine import ATP-binding protein TauB.